The chain runs to 589 residues: PTS system mannitol-specific EIICB component (589 aa).

The Cytoplasmic segment spans residues 1–25 (MEEKVSLKVRVQKLGTSLSNMVMPN). Residues 14–347 (LGTSLSNMVM…LHADKSTEDS (334 aa)) enclose the PTS EIIC type-2 domain. A helical transmembrane segment spans residues 26–47 (IGAFIAWGVLTALFIADGYLPN). Residues 48-51 (EQLA) lie on the Extracellular side of the membrane. Residues 52–72 (TVVGPMLTYLLPILIGYTGGY) form a helical membrane-spanning segment. At 73–135 (MIHGQRGAVV…PGFEMLVNNF (63 aa)) the chain is on the cytoplasmic side. The chain crosses the membrane as a helical span at residues 136 to 157 (SAGLVGFALLLLAFYAIGPVVS). The Extracellular segment spans residues 158 to 166 (TLTGAVGNG). The helical transmembrane segment at 167–187 (VEAIVNARLLPMANIIIEPAK) threads the bilayer. At 188–274 (VLFLNNALNH…VMMKPTLFLA (87 aa)) the chain is on the cytoplasmic side. A helical transmembrane segment spans residues 275 to 294 (AMAGGISGTFTFQLLDAGLK). Over 295–316 (SPASPGSIIAIIATAPKGVWPH) the chain is Extracellular. The helical transmembrane segment at 317–338 (LNVLLGVLVAAVVSFLVAALIL) threads the bilayer. The Cytoplasmic portion of the chain corresponds to 339 to 589 (HADKSTEDSL…YDKMAARMYK (251 aa)). Positions 381 to 476 (EKIIFACDAG…SLTGASPIAE (96 aa)) constitute a PTS EIIB type-2 domain. Cys-387 (phosphocysteine intermediate; for EIIB activity) is an active-site residue. Position 387 is a phosphocysteine; by EIIA (Cys-387).

In terms of assembly, homodimer.

It localises to the cell membrane. It carries out the reaction D-mannitol(out) + N(pros)-phospho-L-histidyl-[protein] = D-mannitol 1-phosphate(in) + L-histidyl-[protein]. Its function is as follows. The phosphoenolpyruvate-dependent sugar phosphotransferase system (sugar PTS), a major carbohydrate active transport system, catalyzes the phosphorylation of incoming sugar substrates concomitantly with their translocation across the cell membrane. The enzyme II CmtAB PTS system is involved in D-mannitol transport. This Streptococcus pneumoniae serotype 4 (strain ATCC BAA-334 / TIGR4) protein is PTS system mannitol-specific EIICB component (mtlA).